A 92-amino-acid polypeptide reads, in one-letter code: Small ribosomal subunit protein bS20 (92 aa).

Disordered regions lie at residues 1-25 and 68-92; these read MALRHKSAQKRHRQSLKRRAINRAK and HKNAAARKKSRLAKAINKAKAAQQA. Residues 80-92 show a composition bias toward low complexity; it reads AKAINKAKAAQQA.

This sequence belongs to the bacterial ribosomal protein bS20 family.

Its function is as follows. Binds directly to 16S ribosomal RNA. This Deinococcus radiodurans (strain ATCC 13939 / DSM 20539 / JCM 16871 / CCUG 27074 / LMG 4051 / NBRC 15346 / NCIMB 9279 / VKM B-1422 / R1) protein is Small ribosomal subunit protein bS20.